The following is a 345-amino-acid chain: N-acetyl-gamma-glutamyl-phosphate reductase (345 aa).

The active site involves Cys-149.

Belongs to the NAGSA dehydrogenase family. Type 1 subfamily.

It is found in the cytoplasm. It catalyses the reaction N-acetyl-L-glutamate 5-semialdehyde + phosphate + NADP(+) = N-acetyl-L-glutamyl 5-phosphate + NADPH + H(+). Its pathway is amino-acid biosynthesis; L-arginine biosynthesis; N(2)-acetyl-L-ornithine from L-glutamate: step 3/4. In terms of biological role, catalyzes the NADPH-dependent reduction of N-acetyl-5-glutamyl phosphate to yield N-acetyl-L-glutamate 5-semialdehyde. This Bacillus cytotoxicus (strain DSM 22905 / CIP 110041 / 391-98 / NVH 391-98) protein is N-acetyl-gamma-glutamyl-phosphate reductase.